We begin with the raw amino-acid sequence, 138 residues long: Cell division protein SepF (138 aa).

Positions 1-59 are disordered; it reads MNNKFKDFFGFGDNDSYEERDAYEEHYDEQEEMQNSNRPTNSRDSNVVSIKAGQAGSGP. Residues 33–48 show a composition bias toward polar residues; the sequence is MQNSNRPTNSRDSNVV.

It belongs to the SepF family. Homodimer. Interacts with FtsZ.

The protein resides in the cytoplasm. Its function is as follows. Cell division protein that is part of the divisome complex and is recruited early to the Z-ring. Probably stimulates Z-ring formation, perhaps through the cross-linking of FtsZ protofilaments. Its function overlaps with FtsA. The polypeptide is Cell division protein SepF (Lactobacillus delbrueckii subsp. bulgaricus (strain ATCC 11842 / DSM 20081 / BCRC 10696 / JCM 1002 / NBRC 13953 / NCIMB 11778 / NCTC 12712 / WDCM 00102 / Lb 14)).